Here is a 297-residue protein sequence, read N- to C-terminus: Transmembrane protein 178A (297 aa).

A signal peptide spans 1-25; it reads MEPRALVTALSLGLSLCSLGLLVTA. Over 26-179 the chain is Extracellular; sequence IFTDHWYETD…LLHLRRITAG (154 aa). Residues 41–57 are compositionally biased toward basic and acidic residues; it reads ESCERSRAGADPPDQKN. The interval 41–86 is disordered; that stretch reads ESCERSRAGADPPDQKNRLMPLSHLPLRDSPPLGRRLLPGGPGRSD. Over residues 68-79 the composition is skewed to low complexity; it reads RDSPPLGRRLLP. The N-linked (GlcNAc...) asparagine glycan is linked to Asn-158. Residues 180–200 traverse the membrane as a helical segment; that stretch reads FLGMAVAVLLCGCIVATVSFF. Residues 201-208 are Cytoplasmic-facing; sequence WEESLTQH. The helical transmembrane segment at 209 to 229 threads the bilayer; sequence VAGLLFLMTGIFCTISLCTYA. The Extracellular segment spans residues 230 to 257; that stretch reads ASVSYDLNRVPKLIYSLPHDVEHGYSWS. A helical membrane pass occupies residues 258-278; it reads IFCAWCSLGFIVAAGGLCIAY. Topologically, residues 279–297 are cytoplasmic; it reads PFISRTKIAHLKSGRDSTV.

The protein belongs to the TMEM178 family. In terms of assembly, interacts with STIM1. As to expression, highly expressed in the bone and its expression increases during osteoclastogenesis.

The protein resides in the endoplasmic reticulum membrane. Acts as a negative regulator of osteoclast differentiation in basal and inflammatory conditions by regulating TNFSF11-induced Ca (2+) fluxes, thereby controlling the induction of NFATC1. In Mus musculus (Mouse), this protein is Transmembrane protein 178A (Tmem178a).